A 294-amino-acid chain; its full sequence is Putative glucose-6-phosphate 1-epimerase (294 aa).

Substrate is bound by residues arginine 74 and arginine 99. Histidine 164 is an active-site residue. Aspartate 208 serves as a coordination point for substrate. Residue glutamate 267 is part of the active site.

It belongs to the glucose-6-phosphate 1-epimerase family. In terms of assembly, monomer in solution.

The enzyme catalyses alpha-D-glucose 6-phosphate = beta-D-glucose 6-phosphate. This Escherichia coli (strain K12) protein is Putative glucose-6-phosphate 1-epimerase (yeaD).